The following is a 410-amino-acid chain: Cysteine desulfurase IscS (410 aa).

Residues 80 to 81, asparagine 160, glutamine 188, and 208 to 210 contribute to the pyridoxal 5'-phosphate site; these read AT and SGH. Residue lysine 211 is modified to N6-(pyridoxal phosphate)lysine. Threonine 248 contributes to the pyridoxal 5'-phosphate binding site. Cysteine 334 serves as the catalytic Cysteine persulfide intermediate. Cysteine 334 is a [2Fe-2S] cluster binding site.

It belongs to the class-V pyridoxal-phosphate-dependent aminotransferase family. NifS/IscS subfamily. Homodimer. Forms a heterotetramer with IscU, interacts with other sulfur acceptors. The cofactor is pyridoxal 5'-phosphate.

Its subcellular location is the cytoplasm. It catalyses the reaction (sulfur carrier)-H + L-cysteine = (sulfur carrier)-SH + L-alanine. It participates in cofactor biosynthesis; iron-sulfur cluster biosynthesis. In terms of biological role, master enzyme that delivers sulfur to a number of partners involved in Fe-S cluster assembly, tRNA modification or cofactor biosynthesis. Catalyzes the removal of elemental sulfur atoms from cysteine to produce alanine. Functions as a sulfur delivery protein for Fe-S cluster synthesis onto IscU, an Fe-S scaffold assembly protein, as well as other S acceptor proteins. The polypeptide is Cysteine desulfurase IscS (Rickettsia felis (strain ATCC VR-1525 / URRWXCal2) (Rickettsia azadi)).